The following is a 324-amino-acid chain: CIMIP2 protein GA14893 (324 aa).

It belongs to the CIMIP2 family.

It localises to the cytoplasm. The protein localises to the cytoskeleton. The protein resides in the cilium axoneme. Functionally, probable microtubule inner protein (MIP) part of the dynein-decorated doublet microtubules (DMTs) in cilium axoneme. The protein is CIMIP2 protein GA14893 of Drosophila pseudoobscura pseudoobscura (Fruit fly).